The following is a 314-amino-acid chain: MPNLKAIRDRIQSVKNTKKITEAMRLVAAAKVRRAQEQVISTRPFADALANVLFNLLNRLKFGDVSLPLLQQRDVKTVGIVVVSGDRGLCGGYNSYVIRRAEQRIKELKEQGVNYRLVTIGRKATQYFSRREAPIESKYTGLNQIPTADEAATIADELLSLFLSETVDRVELIYTRFVSLISSRPVVQTLAPLTMQGLETEDDEIFRLITREGKLQVERETVTQTMSSFPQDMIFEQDPVQILDALLPLYINNQLLRALQEAAASELAARMTAMSNASDNAGQLIGTLTLSYNKARQAAITQQLMEVVAGANAL.

Belongs to the ATPase gamma chain family. F-type ATPases have 2 components, CF(1) - the catalytic core - and CF(0) - the membrane proton channel. CF(1) has five subunits: alpha(3), beta(3), gamma(1), delta(1), epsilon(1). CF(0) has three main subunits: a, b and c.

The protein resides in the cellular thylakoid membrane. Its function is as follows. Produces ATP from ADP in the presence of a proton gradient across the membrane. The gamma chain is believed to be important in regulating ATPase activity and the flow of protons through the CF(0) complex. The protein is ATP synthase gamma chain of Crocosphaera subtropica (strain ATCC 51142 / BH68) (Cyanothece sp. (strain ATCC 51142)).